Here is a 290-residue protein sequence, read N- to C-terminus: 6-phospho-5-dehydro-2-deoxy-D-gluconate aldolase (290 aa).

Asp-85 serves as the catalytic Proton donor. Zn(2+) is bound by residues His-86 and His-180. Gly-181 lines the dihydroxyacetone phosphate pocket. Position 208 (His-208) interacts with Zn(2+). Residues 209-211 and 230-233 contribute to the dihydroxyacetone phosphate site; these read GAS and NINT. Thr-233 is modified (phosphothreonine).

Belongs to the class II fructose-bisphosphate aldolase family. IolJ subfamily. Zn(2+) serves as cofactor.

The catalysed reaction is 6-phospho-5-dehydro-2-deoxy-D-gluconate = 3-oxopropanoate + dihydroxyacetone phosphate. Its pathway is polyol metabolism; myo-inositol degradation into acetyl-CoA; acetyl-CoA from myo-inositol: step 6/7. Its function is as follows. Produces dihydroxyacetone phosphate (DHAP or glycerone phosphate) and malonic semialdehyde (MSA or 3-oxopropanoate) from 6-phospho-5-dehydro-2-deoxy-D-gluconate (DKGP). In Bacillus velezensis (strain DSM 23117 / BGSC 10A6 / LMG 26770 / FZB42) (Bacillus amyloliquefaciens subsp. plantarum), this protein is 6-phospho-5-dehydro-2-deoxy-D-gluconate aldolase (iolJ).